Reading from the N-terminus, the 304-residue chain is Acetylglutamate kinase (304 aa).

Substrate-binding positions include 75 to 76, R97, and N196; that span reads GG.

The protein belongs to the acetylglutamate kinase family. ArgB subfamily.

Its subcellular location is the cytoplasm. It catalyses the reaction N-acetyl-L-glutamate + ATP = N-acetyl-L-glutamyl 5-phosphate + ADP. It functions in the pathway amino-acid biosynthesis; L-arginine biosynthesis; N(2)-acetyl-L-ornithine from L-glutamate: step 2/4. In terms of biological role, catalyzes the ATP-dependent phosphorylation of N-acetyl-L-glutamate. This Corynebacterium urealyticum (strain ATCC 43042 / DSM 7109) protein is Acetylglutamate kinase.